The following is a 431-amino-acid chain: uncharacterized protein (431 aa).

This is an uncharacterized protein from Caenorhabditis elegans.